The primary structure comprises 281 residues: Polyamine aminopropyltransferase (281 aa).

A PABS domain is found at 2–236 (DLWLKEGQIS…GYWSFTIGSK (235 aa)). Q31 lines the S-methyl-5'-thioadenosine pocket. The spermidine site is built by H62 and D86. S-methyl-5'-thioadenosine contacts are provided by residues E106 and 138-139 (DG). The active-site Proton acceptor is the D156. Position 156–159 (156–159 (DSTD)) interacts with spermidine.

It belongs to the spermidine/spermine synthase family. Homodimer or homotetramer.

It localises to the cytoplasm. It catalyses the reaction S-adenosyl 3-(methylsulfanyl)propylamine + putrescine = S-methyl-5'-thioadenosine + spermidine + H(+). It functions in the pathway amine and polyamine biosynthesis; spermidine biosynthesis; spermidine from putrescine: step 1/1. In terms of biological role, catalyzes the irreversible transfer of a propylamine group from the amino donor S-adenosylmethioninamine (decarboxy-AdoMet) to putrescine (1,4-diaminobutane) to yield spermidine. The sequence is that of Polyamine aminopropyltransferase from Clostridium tetani (strain Massachusetts / E88).